A 79-amino-acid polypeptide reads, in one-letter code: Protein FAM236A (79 aa).

Belongs to the FAM236 family.

This Homo sapiens (Human) protein is Protein FAM236A.